The sequence spans 600 residues: MVRRKLRLLVILAGIWLVGIVVYLFKGDDQSEFEKRVIDKGPDGFYVHKEEKEHQPFQEENKAEVLHQVEDQWKKKQDAEITQSRQTFIETKKLLPPDDELGDIPWGQFDELGYISKTTLKPGQDPYARNKFNLQASDNIKSNRHVPDTRHMNCRSETWSQDLPDTSVIITFHNEARSALLRTIVSIFRKSPDHLIREIILVDDFSDDPSDGQELDKIKKVKVLRNDKRQGLIRSRVNGANMAKGKVLTFLDSHCECNEKWLEPLLDRVKQDRRNVVSPIIDVISMDNFDYIGASADLKGGFDWNLVFKWDYMSAEERNRQRQNPTAPIRTPMIAGGLFSIDKSWFDELGQYDLKMDVWGGENLEISFRVWQCHGNLEIIPCSRVGHVFRKQHPYTFPGGSGQIFARNTKRAAEVWMDEYIQFYFAAVPSAKHVDVGDISERLALRDRLQCKPFKWFLENVYPELKIPSVQDIAFGSIKQGNDCMDTMGHFADGILGLYPCHNSGGNQEFSLTKAGEVKHLDLCVTLVDTRPGNEVKLYQCTPGNYKQQFVQNPAKDQLRHKSYDLCLDSVVWQTKGIVANKCDPSSYTQKWTFSLSKNR.

The Cytoplasmic portion of the chain corresponds to Met1–Arg7. The helical; Signal-anchor for type II membrane protein transmembrane segment at Leu8 to Asp28 threads the bilayer. The Lumenal portion of the chain corresponds to Asp29–Arg600. 5 disulfide bridges follow: Cys154/Cys382, Cys373/Cys451, Cys484/Cys501, Cys524/Cys541, and Cys567/Cys583. The segment at Leu163–Arg268 is catalytic subdomain A. 3 residues coordinate substrate: Thr171, Asp204, and Arg229. Asp252 provides a ligand contact to Mn(2+). A substrate-binding site is contributed by Ser253. Mn(2+) is bound at residue His254. Positions Pro328–Arg390 are catalytic subdomain B. Trp359 is a binding site for substrate. His387 is a Mn(2+) binding site. Arg390, His393, and Tyr395 together coordinate substrate. A Ricin B-type lectin domain is found at Lys466–Ser595.

This sequence belongs to the glycosyltransferase 2 family. GalNAc-T subfamily. It depends on Mn(2+) as a cofactor. O-glycosylated.

Its subcellular location is the golgi apparatus membrane. The catalysed reaction is L-seryl-[protein] + UDP-N-acetyl-alpha-D-galactosamine = a 3-O-[N-acetyl-alpha-D-galactosaminyl]-L-seryl-[protein] + UDP + H(+). The enzyme catalyses L-threonyl-[protein] + UDP-N-acetyl-alpha-D-galactosamine = a 3-O-[N-acetyl-alpha-D-galactosaminyl]-L-threonyl-[protein] + UDP + H(+). The protein operates within protein modification; protein glycosylation. Its activity is regulated as follows. No change in activity by addition of up to 10% methanol or glycerol, or 5% acetonitrile. 40% reduction in activity by 10% acetonitrile or by lyophilization. Activity requires divalent cations, the best being Mn(2+) (10-20 mM), followed by Co(2+), Mg(2+) and Ca(2+). Loss of activity with Cu(2+) or in the presence of EDTA. Inhibited by UDP, but not by UMP, UTP, ADP or GDP nucleotides. No inhibition by galactose, N-acetylglucosamine or N-acetylgalactosamine sugars. Functionally, catalyzes the initial reaction in O-linked oligosaccharide biosynthesis, the transfer of an N-acetyl-D-galactosamine residue to a serine or threonine residue on the protein receptor. Has a broad substrate specificity. Acceptor peptides include Muc2, Muc5Ac, Muc1a and Muc1a', with Muc2 as the best acceptor. Acts on non-glycosylated and mono- or multi-glycosylated peptide substrates. Transfers preferably to threonine rather than serine residue. Thr-15 is the most preferred site of glycosylation in Muc2 peptide PTTTPITTTTTVTPTPTPTGTQTK having proline residues at position -1, and at positions +1 and +3, where the number represents the distance from the C-terminal and N-terminal hydroxyl amino acid, respectively. Transfer of the N-acetyl-D-galactosamine (GalNAc) is optimal with proline residues at positions -3, -1, +1 and +3, but other amino acids are tolerated, although some, such as phenylalanine, isoleucine or leucine at -1, or lysine at +3 prevent the transfer completely. Second GalNAc is transferred to Muc2 Thr-2 or Thr-13, both of which have two proline residues nearby. Up to nine sites can be glycosylated within Muc2, but eight are used simultaneously since Thr-19 and Thr-21 are not detected to be glycosylated at the same time. Glycosylation is not detected of a potential site, which is next to an already glycosylated site, but only one amino acid is needed in between two glycosylation sites. Ser-5 is the preferred glycosylation site in Muc5Ac peptide GTTPSPVPTTSTTSAP into which up to four GalNAcs can be attached. Only the threonine residues are detected as pontential glycosylation sites in Muc1a APPAHGVTSAPDTRPAPGC and Muc1a' AHGVTSAPDTR peptides. Transferase activity is restricted to UDP-GalNAc as a donor, and none of the nucleotide sugars UDP-Gal, UDP-GlcNAc, GDP-fucose, UDP-xylose, UDP-glucuronic acid or CMP-neuraminic acid are utilized as donors. This Biomphalaria glabrata (Bloodfluke planorb) protein is Polypeptide N-acetylgalactosaminyltransferase.